Reading from the N-terminus, the 726-residue chain is Dipeptidyl-peptidase 5 (726 aa).

The signal sequence occupies residues 1–19; the sequence is MAAAKWLIASLAFASSGLA. 2 N-linked (GlcNAc...) asparagine glycosylation sites follow: Asn96 and Asn252. A disordered region spans residues 269–291; the sequence is AEPINKRNGPRTPQGIEGASSSP. The Charge relay system role is filled by Ser558. The N-linked (GlcNAc...) asparagine glycan is linked to Asn605. Active-site charge relay system residues include Asp641 and His673. Residue Asn699 is glycosylated (N-linked (GlcNAc...) asparagine).

This sequence belongs to the peptidase S9C family.

It is found in the secreted. In terms of biological role, extracellular dipeptidyl-peptidase which removes N-terminal dipeptides sequentially from polypeptides having unsubstituted N-termini. Contributes to pathogenicity. The sequence is that of Dipeptidyl-peptidase 5 (DPP5) from Trichophyton tonsurans (Scalp ringworm fungus).